A 379-amino-acid polypeptide reads, in one-letter code: Homoserine O-succinyltransferase (379 aa).

In terms of domain architecture, AB hydrolase-1 spans asparagine 51 to leucine 360. The active-site Nucleophile is serine 157. Arginine 227 is a substrate binding site. Catalysis depends on residues aspartate 323 and histidine 356. Position 357 (aspartate 357) interacts with substrate.

This sequence belongs to the AB hydrolase superfamily. MetX family. In terms of assembly, homodimer.

Its subcellular location is the cytoplasm. The enzyme catalyses L-homoserine + succinyl-CoA = O-succinyl-L-homoserine + CoA. It participates in amino-acid biosynthesis; L-methionine biosynthesis via de novo pathway; O-succinyl-L-homoserine from L-homoserine: step 1/1. Its activity is regulated as follows. Requires MetW for activity. Functionally, transfers a succinyl group from succinyl-CoA to L-homoserine, forming succinyl-L-homoserine. The protein is Homoserine O-succinyltransferase of Pseudomonas putida (strain ATCC 47054 / DSM 6125 / CFBP 8728 / NCIMB 11950 / KT2440).